The following is a 35-amino-acid chain: MFDTNATRLPIWGIGCNPWTAEHVDQTLASGNDIC.

Positions 1–10 are excised as a propeptide; that stretch reads MFDTNATRLP. I11 carries the (3R,4R)-4,5-dihydroxyisoleucine; in form alpha-amanitin modification. The residue at position 11 (I11) is a (3R,4S)-4-hydroxyisoleucine; in form gamma-amanitin. The cyclopeptide (Ile-Pro) cross-link spans 11-18; the sequence is IWGIGCNP. Residues 12–16 constitute a cross-link (2'-cysteinyl-6'-hydroxytryptophan sulfoxide (Trp-Cys)); that stretch reads WGIGC. P18 bears the 4-hydroxyproline mark. The propeptide occupies 19–35; it reads WTAEHVDQTLASGNDIC.

This sequence belongs to the MSDIN fungal toxin family. In terms of processing, processed by the macrocyclase-peptidase enzyme POPB to yield a toxic bicyclic octapeptide. POPB first removes 10 residues from the N-terminus. Conformational trapping of the remaining peptide forces the enzyme to release this intermediate rather than proceed to macrocyclization. The enzyme rebinds the remaining peptide in a different conformation and catalyzes macrocyclization of the N-terminal 8 residues.

Its function is as follows. Major toxin belonging to the bicyclic octapeptides amatoxins that acts by binding non-competitively to RNA polymerase II and greatly slowing the elongation of transcripts from target promoters. This chain is Alpha-amanitin proprotein 1, found in Galerina marginata (strain CBS 339.88).